The primary structure comprises 1290 residues: DNA-directed RNA polymerase subunit beta' (1290 aa).

Zn(2+) contacts are provided by cysteine 60, cysteine 62, cysteine 75, and cysteine 78. Mg(2+)-binding residues include aspartate 535, aspartate 537, and aspartate 539. Zn(2+)-binding residues include cysteine 875, cysteine 953, cysteine 960, and cysteine 963.

The protein belongs to the RNA polymerase beta' chain family. The RNAP catalytic core consists of 2 alpha, 1 beta, 1 beta' and 1 omega subunit. When a sigma factor is associated with the core the holoenzyme is formed, which can initiate transcription. The cofactor is Mg(2+). It depends on Zn(2+) as a cofactor.

It carries out the reaction RNA(n) + a ribonucleoside 5'-triphosphate = RNA(n+1) + diphosphate. Functionally, DNA-dependent RNA polymerase catalyzes the transcription of DNA into RNA using the four ribonucleoside triphosphates as substrates. The chain is DNA-directed RNA polymerase subunit beta' from Nocardioides sp. (strain ATCC BAA-499 / JS614).